A 969-amino-acid polypeptide reads, in one-letter code: RNA polymerase-associated protein RapA (969 aa).

The 171-residue stretch at 164–334 (EVGRRYAPRV…FARLRLLDPD (171 aa)) folds into the Helicase ATP-binding domain. An ATP-binding site is contributed by 177 to 184 (DEVGLGKT). The short motif at 280–283 (DEAH) is the DEAH box element. The region spanning 492-668 (RVNWLLELLK…GKSDGLESLI (177 aa)) is the Helicase C-terminal domain.

It belongs to the SNF2/RAD54 helicase family. RapA subfamily. Interacts with the RNAP. Has a higher affinity for the core RNAP than for the holoenzyme. Its ATPase activity is stimulated by binding to RNAP.

In terms of biological role, transcription regulator that activates transcription by stimulating RNA polymerase (RNAP) recycling in case of stress conditions such as supercoiled DNA or high salt concentrations. Probably acts by releasing the RNAP, when it is trapped or immobilized on tightly supercoiled DNA. Does not activate transcription on linear DNA. Probably not involved in DNA repair. In Aliivibrio fischeri (strain MJ11) (Vibrio fischeri), this protein is RNA polymerase-associated protein RapA.